Consider the following 1836-residue polypeptide: Druantia protein DruE (1836 aa).

In terms of domain architecture, Helicase ATP-binding spans 108–405; that stretch reads SFLGEDASDL…FAQDLTGLSP (298 aa). 121 to 128 contacts ATP; the sequence is TGTGSGKT. A DEAH box motif is present at residues 347-350; sequence DEAH. The Helicase C-terminal domain maps to 1014 to 1199; it reads DCTALMPFAL…EVKVNNPKIA (186 aa).

The protein localises to the cytoplasm. Component of antiviral defense system Druantia type I, composed of DruA, DruB, DruC, DruD and DruE. Expression of Druantia in E.coli (strain MG1655) confers resistance to phage lambda, SECphi18, SECphi27 and T4. This protein is probably a helicase. This is Druantia protein DruE from Escherichia coli (strain UMEA 4076-1).